A 495-amino-acid polypeptide reads, in one-letter code: Alkaline protease 2 (495 aa).

The first 16 residues, 1 to 16, serve as a signal peptide directing secretion; sequence MKGYLSLSILPLLVAA. A propeptide spanning residues 17 to 136 is cleaved from the precursor; sequence SPVVVDSIHN…IEKDSEVHTM (120 aa). The 94-residue stretch at 43–136 folds into the Inhibitor I9 domain; that stretch reads SYIVVFKKHV…IEKDSEVHTM (94 aa). Positions 146–452 constitute a Peptidase S8 domain; it reads PWGLARISHR…GGSSNYTDII (307 aa). Active-site charge relay system residues include D182 and H214. N-linked (GlcNAc...) asparagine glycosylation is present at N284. Residue S380 is the Charge relay system of the active site. N447 and N460 each carry an N-linked (GlcNAc...) asparagine glycan.

The protein belongs to the peptidase S8 family.

The enzyme catalyses Hydrolysis of proteins with broad specificity, and of Bz-Arg-OEt &gt; Ac-Tyr-OEt. Does not hydrolyze peptide amides.. Its function is as follows. Alkaline protease that allows assimilation of proteinaceous substrates. Acts as a significant virulence factor in invasive aspergillosis. Required for regular sporulation. This chain is Alkaline protease 2 (alp2), found in Aspergillus fumigatus (strain CBS 144.89 / FGSC A1163 / CEA10) (Neosartorya fumigata).